The sequence spans 426 residues: COMPASS component SWD1 (426 aa).

WD repeat units follow at residues Glu24–Val63, Ala70–Lys109, Ile212–Ala251, Ile264–Val307, and Gly310–Ala350. Residues Arg236 and Lys266 each coordinate DNA.

As to quaternary structure, component of the Set1C/COMPASS complex which consists of SET1(2), BRE2(2), SPP1(2), SDC1(1), SHG1(1), SWD1(1), SWD2(1), and SWD3(1).

It is found in the nucleus. The protein resides in the chromosome. It localises to the telomere. Component of the Set1C/COMPASS complex that specifically mono-, di- and trimethylates histone H3 to form H3K4me1/2/3, which subsequently plays a role in telomere length maintenance and transcription elongation regulation. COMPASS recognizes ubiquitinated H2B on one face of the nucleosome which stimulates the methylation of H3 on the opposing face. SWD1/CPS50 acts as an assembly and regulatory hub for COMPASS complex formation. Serves as a highly utilized surface for COMPASS interaction with the nucleosome. The protein is COMPASS component SWD1 of Saccharomyces cerevisiae (strain ATCC 204508 / S288c) (Baker's yeast).